Reading from the N-terminus, the 174-residue chain is Crossover junction endodeoxyribonuclease RuvC (174 aa).

Catalysis depends on residues aspartate 8, glutamate 68, and aspartate 140. Mg(2+) contacts are provided by aspartate 8, glutamate 68, and aspartate 140.

It belongs to the RuvC family. In terms of assembly, homodimer which binds Holliday junction (HJ) DNA. The HJ becomes 2-fold symmetrical on binding to RuvC with unstacked arms; it has a different conformation from HJ DNA in complex with RuvA. In the full resolvosome a probable DNA-RuvA(4)-RuvB(12)-RuvC(2) complex forms which resolves the HJ. Mg(2+) serves as cofactor.

It localises to the cytoplasm. It catalyses the reaction Endonucleolytic cleavage at a junction such as a reciprocal single-stranded crossover between two homologous DNA duplexes (Holliday junction).. The RuvA-RuvB-RuvC complex processes Holliday junction (HJ) DNA during genetic recombination and DNA repair. Endonuclease that resolves HJ intermediates. Cleaves cruciform DNA by making single-stranded nicks across the HJ at symmetrical positions within the homologous arms, yielding a 5'-phosphate and a 3'-hydroxyl group; requires a central core of homology in the junction. The consensus cleavage sequence is 5'-(A/T)TT(C/G)-3'. Cleavage occurs on the 3'-side of the TT dinucleotide at the point of strand exchange. HJ branch migration catalyzed by RuvA-RuvB allows RuvC to scan DNA until it finds its consensus sequence, where it cleaves and resolves the cruciform DNA. The chain is Crossover junction endodeoxyribonuclease RuvC from Legionella pneumophila (strain Lens).